The sequence spans 366 residues: MRIMISGGGTGGHIYPAIAIANQITEKHPQAKIQFVGTAKGLESELIPKAGYEIKHITVSYLRRKISFHNVKSIAKLIKGLVEARRLIKDFNPDVVIGTGGFVCGPVLYMATKLGYKTLIHEQNVFPGLTNRVLGNYVDRIALSFEEAERYFKSKEKLIITGNPIRREFLEISQEEATQKYNSGSKKHLILVVGGSGGAARINETVVNLLKKHPNNDFKILLVTGQRHFETIKLQLGKKQDTLRYNDVLPYLTNMPHALKACDLLICSAGAITIAEVTAVGKPAIIIPKSYTAGNHQEFNAKALEEKGAAIMIKEEVLNADRLYLEITGLLSDKKRLEQMAKASALSAKTQALEMIYAEVISMIKS.

Residues 10 to 12 (TGG), asparagine 124, arginine 166, serine 196, and glutamine 297 contribute to the UDP-N-acetyl-alpha-D-glucosamine site.

This sequence belongs to the glycosyltransferase 28 family. MurG subfamily.

The protein localises to the cell membrane. The enzyme catalyses di-trans,octa-cis-undecaprenyl diphospho-N-acetyl-alpha-D-muramoyl-L-alanyl-D-glutamyl-meso-2,6-diaminopimeloyl-D-alanyl-D-alanine + UDP-N-acetyl-alpha-D-glucosamine = di-trans,octa-cis-undecaprenyl diphospho-[N-acetyl-alpha-D-glucosaminyl-(1-&gt;4)]-N-acetyl-alpha-D-muramoyl-L-alanyl-D-glutamyl-meso-2,6-diaminopimeloyl-D-alanyl-D-alanine + UDP + H(+). Its pathway is cell wall biogenesis; peptidoglycan biosynthesis. Its function is as follows. Cell wall formation. Catalyzes the transfer of a GlcNAc subunit on undecaprenyl-pyrophosphoryl-MurNAc-pentapeptide (lipid intermediate I) to form undecaprenyl-pyrophosphoryl-MurNAc-(pentapeptide)GlcNAc (lipid intermediate II). The polypeptide is UDP-N-acetylglucosamine--N-acetylmuramyl-(pentapeptide) pyrophosphoryl-undecaprenol N-acetylglucosamine transferase (Alkaliphilus metalliredigens (strain QYMF)).